Here is a 150-residue protein sequence, read N- to C-terminus: Small ribosomal subunit protein eS19 (150 aa).

Belongs to the eukaryotic ribosomal protein eS19 family. In terms of assembly, part of the 30S ribosomal subunit.

Its function is as follows. May be involved in maturation of the 30S ribosomal subunit. This Pyrococcus horikoshii (strain ATCC 700860 / DSM 12428 / JCM 9974 / NBRC 100139 / OT-3) protein is Small ribosomal subunit protein eS19.